A 129-amino-acid chain; its full sequence is Selenoprotein M (129 aa).

The first 19 residues, 1–19 (MARGLAVFFLLAGACLALA), serve as a signal peptide directing secretion. Residues Cys35 and Sec38 each act as nucleophile in the active site. A non-standard amino acid (selenocysteine) is located at residue Sec38. A disordered region spans residues 107–129 (KSSKDEQVPEEYQEGPYMEKEEL). Residues 126–129 (KEEL) carry the Prevents secretion from ER motif.

It belongs to the selenoprotein M/F family. In terms of tissue distribution, high expression levels observed in hepatopancreas, testis, ovaries and intestine. Also expressed in heart, stomach, gills, cranial ganglia, muscle and hematocytes.

It localises to the endoplasmic reticulum. Functionally, may function as a thiol-disulfide oxidoreductase that participates in disulfide bond formation. Involved in the regulation of reproduction during the period of rapid gonadal development. In Eriocheir sinensis (Chinese mitten crab), this protein is Selenoprotein M.